The following is a 215-amino-acid chain: Oligoribonuclease (215 aa).

An Exonuclease domain is found at Leu-5–Leu-170. The active site involves Tyr-127. The disordered stretch occupies residues Leu-196–Gly-215. The segment covering Ala-202–Gly-215 has biased composition (low complexity).

Belongs to the oligoribonuclease family.

It is found in the cytoplasm. Its function is as follows. 3'-to-5' exoribonuclease specific for small oligoribonucleotides. The chain is Oligoribonuclease from Mycolicibacterium paratuberculosis (strain ATCC BAA-968 / K-10) (Mycobacterium paratuberculosis).